The chain runs to 135 residues: Putative pre-16S rRNA nuclease (135 aa).

Belongs to the YqgF nuclease family.

The protein localises to the cytoplasm. Could be a nuclease involved in processing of the 5'-end of pre-16S rRNA. The polypeptide is Putative pre-16S rRNA nuclease (Buchnera aphidicola subsp. Acyrthosiphon pisum (strain 5A)).